The following is a 231-amino-acid chain: Endo-1,4-beta-xylanase A (231 aa).

The N-terminal stretch at 1–19 is a signal peptide; sequence MVSFKSLLVAVSALTGALA. The N-linked (GlcNAc...) asparagine glycan is linked to N32. A GH11 domain is found at 41 to 229; sequence QVTGNSEGYH…SSGSSSIYVQ (189 aa). E125 functions as the Nucleophile in the catalytic mechanism. Residue E216 is the Proton donor of the active site.

Belongs to the glycosyl hydrolase 11 (cellulase G) family.

The protein localises to the secreted. The catalysed reaction is Endohydrolysis of (1-&gt;4)-beta-D-xylosidic linkages in xylans.. The protein operates within glycan degradation; xylan degradation. With respect to regulation, inhibited by the proteinaceous endoxylanase inhibitor I from T.aestivum (TAXI-I). Its function is as follows. Endo-1,4-beta-xylanase involved in the hydrolysis of xylan, a major structural heterogeneous polysaccharide found in plant biomass representing the second most abundant polysaccharide in the biosphere, after cellulose. Plays an important role in causing fusarium head blight (FHB) on cereal crops. In Gibberella zeae (strain ATCC MYA-4620 / CBS 123657 / FGSC 9075 / NRRL 31084 / PH-1) (Wheat head blight fungus), this protein is Endo-1,4-beta-xylanase A (XYLA).